A 116-amino-acid chain; its full sequence is Putative pterin-4-alpha-carbinolamine dehydratase 1 (116 aa).

It belongs to the pterin-4-alpha-carbinolamine dehydratase family.

It catalyses the reaction (4aS,6R)-4a-hydroxy-L-erythro-5,6,7,8-tetrahydrobiopterin = (6R)-L-erythro-6,7-dihydrobiopterin + H2O. The sequence is that of Putative pterin-4-alpha-carbinolamine dehydratase 1 from Gloeobacter violaceus (strain ATCC 29082 / PCC 7421).